A 320-amino-acid polypeptide reads, in one-letter code: MQTRKTFSWIKEEITRSISVLLMIYIITWASISNAYPIFAQQGYENPREATGRIVCANCHLANKPVDIEVPQAVLPDTVFEAVVRIPYDMQLKQVLANGKKGALNVGAVLILPEGFELAPPDRISPEMKEKMGNLSFQSYRPTKKNILVIGPVPGQKYSEITFPILSPDPAAKKDVHFLKYPIYVGGNRGRGQIYPDGSKSNNTVYNATAAGIVSKIIRKEKGGYEITITDASEGRQVIDIIPPGPELLVSEGESIKLDQPLTSNPNVGGFGQGDAEIVLQDPLRVQGLLFFLASVILAQIFLVLKKKQFEKVQLSEMNF.

Positions 1-35 (MQTRKTFSWIKEEITRSISVLLMIYIITWASISNA) are cleaved as a signal peptide. 4 residues coordinate heme: Tyr-36, Cys-56, Cys-59, and His-60. A helical transmembrane segment spans residues 286-306 (VQGLLFFLASVILAQIFLVLK).

The protein belongs to the cytochrome f family. As to quaternary structure, the 4 large subunits of the cytochrome b6-f complex are cytochrome b6, subunit IV (17 kDa polypeptide, petD), cytochrome f and the Rieske protein, while the 4 small subunits are PetG, PetL, PetM and PetN. The complex functions as a dimer. It depends on heme as a cofactor.

It localises to the plastid. The protein resides in the chloroplast thylakoid membrane. Component of the cytochrome b6-f complex, which mediates electron transfer between photosystem II (PSII) and photosystem I (PSI), cyclic electron flow around PSI, and state transitions. The chain is Cytochrome f from Manihot esculenta (Cassava).